We begin with the raw amino-acid sequence, 176 residues long: Flavodoxin 1 (176 aa).

The region spanning 4–165 (TGIFFGSDTG…RVEKWVKQVS (162 aa)) is the Flavodoxin-like domain.

This sequence belongs to the flavodoxin family. FMN is required as a cofactor.

In terms of biological role, low-potential electron donor to a number of redox enzymes (Potential). Involved in the reactivation of inactive cob(II)alamin in methionine synthase. The sequence is that of Flavodoxin 1 (fldA) from Salmonella typhimurium (strain LT2 / SGSC1412 / ATCC 700720).